A 160-amino-acid polypeptide reads, in one-letter code: Nucleotide-binding protein Noc_2254 (160 aa).

The protein belongs to the YajQ family.

In terms of biological role, nucleotide-binding protein. The polypeptide is Nucleotide-binding protein Noc_2254 (Nitrosococcus oceani (strain ATCC 19707 / BCRC 17464 / JCM 30415 / NCIMB 11848 / C-107)).